We begin with the raw amino-acid sequence, 403 residues long: MDAKKLDTGPRDAINWLPDEILGKILSLLATKQAVSTSVLSKKWRTLFKLVDTLEFDDSVSGMGEQEASYVFPESFKDLVDRTVALQCDYPIRKLSLKCHVGRDDEQRKACVGRWISNVVGRGVSEVVLRINDRGLHFLSPQLLTCKTLVKLTLGTRLFLGKLPSYVSLPSLKFLFIHSVFFDDFGELSNVLLAGCPVVEALYLNQNGESMPYTISSPTLKRLSVHYEYHFESVISFDLPNLEYLDYSDYALYGYPQVNLESLVEAYLNLDKAEHVESPDVTKLIMGIRNVEILSLSPDSVGVIYSCCKYGLLLPVFNNLVSLSFGTKKTRAWKLLADILKQSPKLETLIIEDLNGYPLDVSMPLNQVKELQILEYGESDDEVKRLKSFLGEESMIEVVFPEV.

Residues 11-59 form the F-box domain; that stretch reads RDAINWLPDEILGKILSLLATKQAVSTSVLSKKWRTLFKLVDTLEFDDS. LRR repeat units lie at residues 239–262 and 288–312; these read LPNL…NLES and IRNV…KYGL.

The polypeptide is F-box/LRR-repeat protein At1g06630 (Arabidopsis thaliana (Mouse-ear cress)).